We begin with the raw amino-acid sequence, 874 residues long: Isopimaradiene synthase, chloroplastic (874 aa).

Residues 1–12 (MALPSSSLSSRI) are compositionally biased toward polar residues. Residues 1–20 (MALPSSSLSSRIPTGPHPLT) form a disordered region. A chloroplast-targeting transit peptide spans 1-37 (MALPSSSLSSRIPTGPHPLTHTQCIPHFSTTINAGIS). Positions 407, 409, 626, 630, 770, and 778 each coordinate Mg(2+). The short motif at 407–410 (DIDD) is the DXDD motif element. Positions 626–630 (DDLYD) match the DDXXD motif motif.

It belongs to the terpene synthase family. Tpsd subfamily. Mg(2+) is required as a cofactor. It depends on Mn(2+) as a cofactor.

It is found in the plastid. The protein localises to the chloroplast. The enzyme catalyses (+)-copalyl diphosphate = isopimara-8(14),15-diene + diphosphate. It functions in the pathway terpene metabolism; oleoresin biosynthesis. In terms of biological role, terpene synthase (TPS) involved in the biosynthesis of diterpene natural products included in conifer oleoresin secretions and volatile emissions; these compounds contribute to biotic and abiotic stress defense against herbivores and pathogens. Catalyzes the conversion of (+)-copalyl diphosphate ((+)-CPP) to isopimaradiene. This chain is Isopimaradiene synthase, chloroplastic, found in Picea sitchensis (Sitka spruce).